The sequence spans 182 residues: Adenine phosphoribosyltransferase (182 aa).

This sequence belongs to the purine/pyrimidine phosphoribosyltransferase family. Homodimer.

Its subcellular location is the cytoplasm. The catalysed reaction is AMP + diphosphate = 5-phospho-alpha-D-ribose 1-diphosphate + adenine. It functions in the pathway purine metabolism; AMP biosynthesis via salvage pathway; AMP from adenine: step 1/1. Catalyzes a salvage reaction resulting in the formation of AMP, that is energically less costly than de novo synthesis. This is Adenine phosphoribosyltransferase from Pseudomonas putida (strain GB-1).